A 789-amino-acid chain; its full sequence is MLCGRWRRCRRPPEEPPVAAQVAAQVAAPVALPSPPTPSDGGTKRPGLRALKKMGLTEDEDVRAMLRGSRLRKIRSRTWHKERLYRLQEDGLSVWFQRRIPRAPSQHIFFVQHIEAVREGHQSEGLRRFGGAFAPARCLTIAFKGRRKNLDLAAPTAEEAQRWVRGLTKLRARLDAMSQRERLDHWIHSYLHRADSNQDSKMSFKEIKSLLRMVNVDMNDMYAYLLFKECDHSNNDRLEGAEIEEFLRRLLKRPELEEIFHQYSGEDRVLSAPELLEFLEDQGEEGATLARAQQLIQTYELNETAKQHELMTLDGFMMYLLSPEGAALDNTHTCVFQDMNQPLAHYFISSSHNTYLTDSQIGGPSSTEAYVRAFAQGCRCVELDCWEGPGGEPVIYHGHTLTSKILFRDVVQAVRDHAFTLSPYPVILSLENHCGLEQQAAMARHLCTILGDMLVTQALDSPNPEELPSPEQLKGRVLVKGKKLPAARSEDGRALSDREEEEEDDEEEEEEVEAAAQRRLAKQISPELSALAVYCHATRLRTLHPAPNAPQPCQVSSLSERKAKKLIREAGNSFVRHNARQLTRVYPLGLRMNSANYSPQEMWNSGCQLVALNFQTPGYEMDLNAGRFLVNGQCGYVLKPACLRQPDSTFDPEYPGPPRTTLSIQVLTAQQLPKLNAEKPHSIVDPLVRIEIHGVPADCARQETDYVLNNGFNPRWGQTLQFQLRAPELALVRFVVEDYDATSPNDFVGQFTLPLSSLKQGYRHIHLLSKDGASLSPATLFIQIRIQRS.

The 110-residue stretch at 63 to 172 folds into the PH domain; it reads RAMLRGSRLR…WVRGLTKLRA (110 aa). The interval 73–101 is substrate binding; the sequence is KIRSRTWHKERLYRLQEDGLSVWFQRRIP. Ser-105 is modified (phosphoserine). EF-hand domains are found at residues 182 to 217, 218 to 253, and 250 to 285; these read RLDH…VNVD, MNDM…LLKR, and LLKR…QGEE. Residues Asp-195, Asn-197, Asp-199, Lys-201, Glu-206, Asp-231, Ser-233, Asn-235, Arg-237, and Glu-242 each coordinate Ca(2+). Positions 337 to 482 constitute a PI-PLC X-box domain; the sequence is QDMNQPLAHY…LKGRVLVKGK (146 aa). His-352 is an active-site residue. Ca(2+) is bound by residues Asn-353, Glu-382, and Asp-384. The active site involves His-397. Glu-431 contributes to the Ca(2+) binding site. Residues 461 to 519 are disordered; that stretch reads SPNPEELPSPEQLKGRVLVKGKKLPAARSEDGRALSDREEEEEDDEEEEEEVEAAAQRR. The substrate site is built by Lys-480 and Lys-482. Positions 488 to 497 are enriched in basic and acidic residues; the sequence is RSEDGRALSD. Ser-496 carries the post-translational modification Phosphoserine. Residues 498–513 are compositionally biased toward acidic residues; sequence REEEEEDDEEEEEEVE. Positions 528-644 constitute a PI-PLC Y-box domain; sequence LSALAVYCHA…GYVLKPACLR (117 aa). Ser-557 contributes to the substrate binding site. At Ser-573 the chain carries Phosphoserine. Substrate is bound at residue Arg-584. Residues 644 to 769 form the C2 domain; it reads RQPDSTFDPE…QGYRHIHLLS (126 aa). Residues Ile-683, Asp-685, Asn-709, Asp-738, Tyr-739, and Asp-740 each contribute to the Ca(2+) site.

The cofactor is Ca(2+). In terms of tissue distribution, present in corneal epithelial cells (at protein level).

It localises to the membrane. It is found in the cytoplasm. The protein resides in the cleavage furrow. The catalysed reaction is a 1,2-diacyl-sn-glycero-3-phospho-(1D-myo-inositol-4,5-bisphosphate) + H2O = 1D-myo-inositol 1,4,5-trisphosphate + a 1,2-diacyl-sn-glycerol + H(+). With respect to regulation, strongly activated by phosphatidic acid. Inhibited by phosphatidylethanolamine (PtdEtn), phosphatidylcholine (PtdCho), sphingomyelin and phosphatidylserine (PtdSer). Its function is as follows. Hydrolyzes the phosphatidylinositol 4,5-bisphosphate (PIP2) to generate 2 second messenger molecules diacylglycerol (DAG) and inositol 1,4,5-trisphosphate (IP3). DAG mediates the activation of protein kinase C (PKC), while IP3 releases Ca(2+) from intracellular stores. Essential for trophoblast and placental development. May participate in cytokinesis by hydrolyzing PIP2 at the cleavage furrow. Regulates neurite outgrowth through the inhibition of RhoA/Rho kinase signaling. This Homo sapiens (Human) protein is 1-phosphatidylinositol 4,5-bisphosphate phosphodiesterase delta-3.